The sequence spans 84 residues: uncharacterized protein (84 aa).

The HTH cro/C1-type domain occupies 7-62 (IDVMLAKRKMSVTELSERVGITMANLSILKNGKAKAIRLSTLEAICKALECQPGDI). The H-T-H motif DNA-binding region spans 18 to 37 (VTELSERVGITMANLSILKN).

This is an uncharacterized protein from Bacillus subtilis (strain 168).